A 102-amino-acid chain; its full sequence is Small ribosomal subunit protein uS10 (102 aa).

It belongs to the universal ribosomal protein uS10 family. As to quaternary structure, part of the 30S ribosomal subunit.

Functionally, involved in the binding of tRNA to the ribosomes. The protein is Small ribosomal subunit protein uS10 of Paracoccus denitrificans (strain Pd 1222).